A 903-amino-acid chain; its full sequence is Protein translocase subunit SecA (903 aa).

ATP is bound by residues glutamine 87, 105–109 (GEGKT), and aspartate 507. 2 disordered regions span residues 565 to 584 (ESRR…GDPG) and 855 to 877 (AEPG…LASQ). Residues cysteine 887, cysteine 889, cysteine 898, and histidine 899 each coordinate Zn(2+).

Belongs to the SecA family. Monomer and homodimer. Part of the essential Sec protein translocation apparatus which comprises SecA, SecYEG and auxiliary proteins SecDF-YajC and YidC. Requires Zn(2+) as cofactor.

Its subcellular location is the cell inner membrane. The protein localises to the cytoplasm. The catalysed reaction is ATP + H2O + cellular proteinSide 1 = ADP + phosphate + cellular proteinSide 2.. Its function is as follows. Part of the Sec protein translocase complex. Interacts with the SecYEG preprotein conducting channel. Has a central role in coupling the hydrolysis of ATP to the transfer of proteins into and across the cell membrane, serving both as a receptor for the preprotein-SecB complex and as an ATP-driven molecular motor driving the stepwise translocation of polypeptide chains across the membrane. This is Protein translocase subunit SecA from Chromobacterium violaceum (strain ATCC 12472 / DSM 30191 / JCM 1249 / CCUG 213 / NBRC 12614 / NCIMB 9131 / NCTC 9757 / MK).